A 983-amino-acid chain; its full sequence is Kinesin-like protein KIN-14I (983 aa).

A Calponin-homology (CH) domain is found at 44–166; it reads ASRRYEAANW…CVLAIKSYDE (123 aa). 2 stretches are compositionally biased toward polar residues: residues 203 to 214 and 278 to 287; these read SLSRTSSINNEK and ESTSSQNNRS. Disordered stretches follow at residues 203 to 227 and 276 to 295; these read SLSRTSSINNEKAPSENDSNKLSSP and PRESTSSQNNRSFLKPLGER. The 326-residue stretch at 399 to 724 folds into the Kinesin motor domain; sequence SIRVYCRVRP…LKFAERVATV (326 aa). ATP is bound at residue 481-488; it reads GQTGSGKT. Positions 731–758 form a coiled coil; that stretch reads VNNDTSDVKELKEQIATLKAALARKEAE. Disordered regions lie at residues 802-824 and 921-983; these read TVNSPPWPPVASPGQAYREDDRS and TRSN…NARH. Over residues 939 to 951 the composition is skewed to polar residues; sequence SPQSRNNSNNTVS.

It belongs to the TRAFAC class myosin-kinesin ATPase superfamily. Kinesin family. KIN-14 subfamily.

This is Kinesin-like protein KIN-14I from Arabidopsis thaliana (Mouse-ear cress).